Reading from the N-terminus, the 112-residue chain is MNFDMSKLMQQAQKMQEQMKKAQQERENMEVIGESGAGLVTVTMTGKYDVKSVSIDNSLMSEDKEILEDLIAAAVNSAVKKVEENSTASSDIYKMAKDAGIDLPSGINFPFK.

The segment at 1 to 27 (MNFDMSKLMQQAQKMQEQMKKAQQERE) is disordered. Residues 17–27 (EQMKKAQQERE) are compositionally biased toward basic and acidic residues.

The protein belongs to the YbaB/EbfC family. As to quaternary structure, homodimer.

The protein localises to the cytoplasm. The protein resides in the nucleoid. Its function is as follows. Binds to DNA and alters its conformation. May be involved in regulation of gene expression, nucleoid organization and DNA protection. The polypeptide is Nucleoid-associated protein FTF0810c (Francisella tularensis subsp. tularensis (strain FSC 198)).